The sequence spans 672 residues: Acetoacetyl-CoA synthetase (672 aa).

It belongs to the ATP-dependent AMP-binding enzyme family.

Its subcellular location is the cytoplasm. The protein localises to the cytosol. The enzyme catalyses acetoacetate + ATP + CoA = acetoacetyl-CoA + AMP + diphosphate. Its function is as follows. Converts acetoacetate to acetoacetyl-CoA in the cytosol. Ketone body-utilizing enzyme, responsible for the synthesis of cholesterol and fatty acids. In Macaca fascicularis (Crab-eating macaque), this protein is Acetoacetyl-CoA synthetase (AACS).